Consider the following 418-residue polypeptide: Sprouty-related, EVH1 domain-containing protein 2 (418 aa).

In terms of domain architecture, WH1 spans 5–122 (THPDDDSYIV…RGVRKAIEDL (118 aa)). Positions 127–172 (TTSSSTIHNEAELGDDDVFTTATDSSSNSSQKREQPTRTVSSPTSC) are disordered. A compositionally biased stretch (polar residues) spans 146–156 (TTATDSSSNSS). Positions 201 to 257 (PYRQVSFPDDDEEIVRINPREKIWMTGYEDYRHAPVRGKYPDPSEDVDSSYVRFAKG) constitute a KBD domain. The residue at position 206 (serine 206) is a Phosphoserine. Phosphotyrosine is present on residues tyrosine 228 and tyrosine 231. Residues 275-302 (GLGEDPKGRGGSVIKTQPSRGKSRRRKE) are disordered. The SPR domain occupies 308 to 416 (RCVYCRDMFN…CRCCGGKHKA (109 aa)).

As to quaternary structure, homodimer and heterodimer. Able to interact with SPRED1 to form heterodimers. Interacts with RAS. May interact with ZDHHC13 (via ANK repeats) and ZDHHC17 (via ANK repeats). Interacts with TESK1. Interacts with NF1. Phosphorylated on serine and threonine residues. Phosphorylated on tyrosine. Phosphorylation of Tyr-228 and Tyr-231 are required for ubiquitination. In terms of processing, ubiquitinated; leading to degradation by the proteasome.

It is found in the cell membrane. The protein localises to the cytoplasmic vesicle. It localises to the secretory vesicle membrane. Its subcellular location is the cytoplasm. Functionally, negatively regulates Ras signaling pathways and downstream activation of MAP kinases. Recruits and translocates NF1 to the cell membrane, thereby enabling NF1-dependent hydrolysis of active GTP-bound Ras to inactive GDP-bound Ras. Inhibits fibroblast growth factor (FGF)-induced retinal lens fiber differentiation, probably by inhibiting FGF-mediated phosphorylation of ERK1/2. Inhibits TGFB-induced epithelial-to-mesenchymal transition in lens epithelial cells. The polypeptide is Sprouty-related, EVH1 domain-containing protein 2 (SPRED2) (Pongo abelii (Sumatran orangutan)).